The sequence spans 733 residues: DNA repair and recombination protein RAD54-like (733 aa).

The segment at 1 to 35 is disordered; it reads LAKRKAGGEEEDGEWRPPATQKRQKAGSEAESADC. In terms of domain architecture, Helicase ATP-binding spans 159–334; sequence SRRIPGSHGC…FSLVHFVNSG (176 aa). 172 to 179 is an ATP binding site; sequence DEMGLGKT. The DEGH box motif lies at 285 to 288; it reads DEGH. Positions 488–642 constitute a Helicase C-terminal domain; sequence LVLDYILAVT…CVVDEEQDVE (155 aa). Lysine 504 carries the post-translational modification N6-acetyllysine. Serine 561 carries the post-translational modification Phosphoserine; by NEK1.

The protein belongs to the SNF2/RAD54 helicase family. As to quaternary structure, homohexamer. Interacts (via N-terminus) with RAD51. Interacts with NAP1L1. Interacts with BRD9; this interaction orchestrates RAD51-RAD54 complex formation. In terms of processing, acetylated. Acetylation promotes interaction with BRD9, and subsequently with RAD54, which is essential for homologous recombination (HR). Post-translationally, phosphorylated. Phosphorylation at Ser-561 by NEK1 specifically in G2 phase allows efficient removal of RAD51 filaments from DNA. In terms of tissue distribution, highly expressed in bursa, thymus, testis, and ovary. Low level of expression seen in all other organs tested.

The protein resides in the nucleus. Plays an essential role in homologous recombination (HR) which is a major pathway for repairing DNA double-strand breaks (DSBs), single-stranded DNA (ssDNA) gaps, and stalled or collapsed replication forks. Acts as a molecular motor during the homology search and guides RAD51 ssDNA along a donor dsDNA thereby changing the homology search from the diffusion-based mechanism to a motor-guided mechanism. Plays also an essential role in RAD51-mediated synaptic complex formation which consists of three strands encased in a protein filament formed once homology is recognized. Once DNA strand exchange occured, dissociates RAD51 from nucleoprotein filaments formed on dsDNA. This is DNA repair and recombination protein RAD54-like (RAD54L) from Gallus gallus (Chicken).